The following is a 273-amino-acid chain: NADPH-dependent 7-cyano-7-deazaguanine reductase (273 aa).

A substrate-binding site is contributed by 80 to 82; sequence IES. Residue 82–83 participates in NADPH binding; sequence SK. The Thioimide intermediate role is filled by cysteine 180. Residue aspartate 187 is the Proton donor of the active site. Substrate is bound at residue 219–220; it reads HE. 248-249 is a binding site for NADPH; that stretch reads RG.

Belongs to the GTP cyclohydrolase I family. QueF type 2 subfamily. Homodimer.

Its subcellular location is the cytoplasm. It catalyses the reaction 7-aminomethyl-7-carbaguanine + 2 NADP(+) = 7-cyano-7-deazaguanine + 2 NADPH + 3 H(+). It functions in the pathway tRNA modification; tRNA-queuosine biosynthesis. Catalyzes the NADPH-dependent reduction of 7-cyano-7-deazaguanine (preQ0) to 7-aminomethyl-7-deazaguanine (preQ1). The polypeptide is NADPH-dependent 7-cyano-7-deazaguanine reductase (Bordetella avium (strain 197N)).